The chain runs to 100 residues: Co-chaperonin GroES (100 aa).

This sequence belongs to the GroES chaperonin family. In terms of assembly, heptamer of 7 subunits arranged in a ring. Interacts with the chaperonin GroEL.

It localises to the cytoplasm. Together with the chaperonin GroEL, plays an essential role in assisting protein folding. The GroEL-GroES system forms a nano-cage that allows encapsulation of the non-native substrate proteins and provides a physical environment optimized to promote and accelerate protein folding. GroES binds to the apical surface of the GroEL ring, thereby capping the opening of the GroEL channel. The protein is Co-chaperonin GroES of Mycobacterium tuberculosis (strain CDC 1551 / Oshkosh).